The primary structure comprises 82 residues: Small ribosomal subunit protein uS17 (82 aa).

Belongs to the universal ribosomal protein uS17 family. In terms of assembly, part of the 30S ribosomal subunit.

Functionally, one of the primary rRNA binding proteins, it binds specifically to the 5'-end of 16S ribosomal RNA. The protein is Small ribosomal subunit protein uS17 of Nitrobacter hamburgensis (strain DSM 10229 / NCIMB 13809 / X14).